We begin with the raw amino-acid sequence, 494 residues long: Glutamate--tRNA ligase (494 aa).

The short motif at 9-19 is the 'HIGH' region element; the sequence is PSPTGDPHVGT. The short motif at 250–254 is the 'KMSKS' region element; sequence KLSKR. Position 253 (K253) interacts with ATP.

The protein belongs to the class-I aminoacyl-tRNA synthetase family. Glutamate--tRNA ligase type 1 subfamily. As to quaternary structure, monomer.

Its subcellular location is the cytoplasm. It carries out the reaction tRNA(Glu) + L-glutamate + ATP = L-glutamyl-tRNA(Glu) + AMP + diphosphate. Functionally, catalyzes the attachment of glutamate to tRNA(Glu) in a two-step reaction: glutamate is first activated by ATP to form Glu-AMP and then transferred to the acceptor end of tRNA(Glu). This Alcanivorax borkumensis (strain ATCC 700651 / DSM 11573 / NCIMB 13689 / SK2) protein is Glutamate--tRNA ligase.